The sequence spans 207 residues: Guanylate kinase (207 aa).

Residues 4 to 184 (GTLYIVSAPS…ALTDLKTIIR (181 aa)) enclose the Guanylate kinase-like domain. 11–18 (APSGAGKS) is an ATP binding site.

This sequence belongs to the guanylate kinase family.

It is found in the cytoplasm. The catalysed reaction is GMP + ATP = GDP + ADP. Functionally, essential for recycling GMP and indirectly, cGMP. This chain is Guanylate kinase, found in Escherichia coli O157:H7.